Reading from the N-terminus, the 590-residue chain is L-erythrulose kinase (590 aa).

Positions 7–331 constitute a DhaK domain; the sequence is QPSSFARELT…WRAPADAPAF (325 aa). Histidine 217 serves as the catalytic Tele-hemiaminal-histidine intermediate. The 203-residue stretch at 366 to 568 folds into the DhaL domain; sequence HCVAAALNAA…LAMILDAVSA (203 aa). Residues 398 to 401, 441 to 442, glycine 483, arginine 540, and 553 to 555 contribute to the ADP site; these read HGIG, TS, and DAG.

The catalysed reaction is L-erythrulose + ATP = L-erythrulose 1-phosphate + ADP + H(+). The protein operates within carbohydrate metabolism. In terms of biological role, involved in catabolism of D-apiose. Catalyzes the phosphorylation of L-erythrulose to L-erythrulose 1-phosphate. Can also phosphorylate D-erythrulose and dihydroxyacetone in vitro. In Pectobacterium atrosepticum (strain SCRI 1043 / ATCC BAA-672) (Erwinia carotovora subsp. atroseptica), this protein is L-erythrulose kinase.